A 192-amino-acid chain; its full sequence is uncharacterized protein (192 aa).

Residues H29–S160 enclose the Nudix hydrolase domain. The Nudix box motif lies at G67 to A89. Residues E83 and E87 each contribute to the Mg(2+) site.

The protein belongs to the Nudix hydrolase family. PCD1 subfamily. Mn(2+) is required as a cofactor. It depends on Mg(2+) as a cofactor.

Functionally, probably mediates the hydrolysis of some nucleoside diphosphate derivatives. This is an uncharacterized protein from Shigella flexneri serotype 5b (strain 8401).